The following is a 654-amino-acid chain: Tetratricopeptide repeat protein 30 homolog (654 aa).

TPR repeat units lie at residues 10–43 (DGEYTKTIYTMIKEERFQDAINTLNTIPESSTTR), 44–76 (AGLSLLGHCYYQTQDFIEAANCYEHLLNLVPDV), 145–178 (ASTKNDEGCLLYQANMYEDALQRYVSALQAGGFN), 180–212 (HVAYNAALCHYRRKENSQALNYIAEIVERGIRN), 393–426 (CRSATDQNALRMALREYEGALESYLPVAMARAWI), 452–485 (SWRLHAAHVLFMRGDRYKEAAAFYEPIVRQNYDD), and 535–568 (CIVNLVIGTLYCAKNNYEFGLSRIAHALDGGSGA).

This sequence belongs to the TTC30/dfy-1/fleer family.

It localises to the cell projection. Its subcellular location is the cilium. Functionally, required for polyglutamylation of axonemal tubulin in sensory cilia. Plays a role in anterograde intraflagellar transport (IFT), the process by which cilia precursors are transported from the base of the cilium to the site of their incorporation at the tip. This is Tetratricopeptide repeat protein 30 homolog from Anopheles gambiae (African malaria mosquito).